A 565-amino-acid chain; its full sequence is 4-coumarate--CoA ligase-like 2 (565 aa).

ATP is bound by residues S221, S222, G223, T224, T225, and K229. Residue F265 participates in (E)-4-coumaroyl-AMP binding. CoA is bound at residue K286. The interval 288–359 (DMAKLLSAVE…ENYPKVKILQ (72 aa)) is SBD1. Residues G337, Q359, G360, and T364 each coordinate (E)-4-coumaroyl-AMP. ATP is bound by residues Q359, G360, T364, D445, and R460. Residues 360–424 (GYGLTESTAI…IRSPTVMKGY (65 aa)) are SBD2. Positions 462 and 466 each coordinate (E)-4-coumaroyl-AMP. Position 469 (G469) interacts with CoA. K551 lines the ATP pocket. The short motif at 563 to 565 (SKL) is the Microbody targeting signal element.

The protein belongs to the ATP-dependent AMP-binding enzyme family. The cofactor is Mg(2+).

It is found in the peroxisome. It catalyses the reaction (E)-4-coumarate + ATP + CoA = (E)-4-coumaroyl-CoA + AMP + diphosphate. The enzyme catalyses (E)-4-coumarate + ATP + H(+) = (E)-4-coumaroyl-AMP + diphosphate. The catalysed reaction is (E)-4-coumaroyl-AMP + CoA = (E)-4-coumaroyl-CoA + AMP + H(+). Carboxylate--CoA ligase that may use 4-coumarate as substrate. Follows a two-step reaction mechanism, wherein the carboxylate substrate first undergoes adenylation by ATP, followed by a thioesterification in the presence of CoA to yield the final CoA thioester. This Arabidopsis thaliana (Mouse-ear cress) protein is 4-coumarate--CoA ligase-like 2.